Here is a 211-residue protein sequence, read N- to C-terminus: Thymidine kinase (211 aa).

ATP is bound by residues S9–S16 and D87–Q90. The Proton acceptor role is filled by E88. The Zn(2+) site is built by C145, C147, C182, and H185.

The protein belongs to the thymidine kinase family. Homotetramer.

The protein resides in the cytoplasm. It carries out the reaction thymidine + ATP = dTMP + ADP + H(+). In Rhodopirellula baltica (strain DSM 10527 / NCIMB 13988 / SH1), this protein is Thymidine kinase.